A 304-amino-acid chain; its full sequence is DCN1-like protein 3 (304 aa).

2 disordered regions span residues 1–86 (MGQC…AEES) and 284–304 (EGEG…EEQT). The N-myristoyl glycine moiety is linked to residue G2. Positions 86–278 (SSLQRLEELF…LFDTFVEWEM (193 aa)) constitute a DCUN1 domain.

Part of a complex containing DCUN1D3, CUL3 and RBX1. Interacts (via the DCUN1 domain) with the unneddylated cullins: interacts with CUL1, CUL2, CUL3, CUL4A, CUL4B and CUL5; these interactions promote the cullin neddylation and the identity of the cullin dictates the affinity of the interaction. Interacts preferentially with CUL3; this interaction triggers the relocalization of CUL3 to the cell membrane where CUL3 is neddylated. Interacts (via DCUN1 domain) with RBX1. May also interact with regulators or subunits of cullin-RING ligases such as RNF7, ELOB and DDB1; these interactions are bridged by cullins. Interacts (via DCUN1 domain) with CAND1; this interaction is bridged by cullins and strongly inhibits cullin neddylation. These CAND-cullin-DCNL complexes can only be neddylated in the presence of a substrate adapter. Interacts (via DCUN1 domain) with the N-terminally acetylated form of UBE2M and UBE2F.

It localises to the cell membrane. It is found in the cytoplasm. The protein resides in the nucleus. Its subcellular location is the perinuclear region. Its function is as follows. Contributes to the neddylation of all cullins by transferring NEDD8 from N-terminally acetylated NEDD8-conjugating E2s enzyme to different cullin C-terminal domain-RBX complexes and may play a role in the cell cycle progression by regulating the SCF ubiquitin E3 ligase complex, after UV damage. At the cell membrane, can promote and as well inhibit cullins neddylation. The sequence is that of DCN1-like protein 3 from Pongo abelii (Sumatran orangutan).